A 325-amino-acid chain; its full sequence is DNA-directed RNA polymerase subunit alpha (325 aa).

Residues 1 to 231 form an alpha N-terminal domain (alpha-NTD) region; it reads MQTSLLKPKI…DQLSVFAALE (231 aa). The interval 246 to 325 is alpha C-terminal domain (alpha-CTD); the sequence is IDPILLRPVD…ENWPPAGLDK (80 aa).

It belongs to the RNA polymerase alpha chain family. As to quaternary structure, homodimer. The RNAP catalytic core consists of 2 alpha, 1 beta, 1 beta' and 1 omega subunit. When a sigma factor is associated with the core the holoenzyme is formed, which can initiate transcription.

It catalyses the reaction RNA(n) + a ribonucleoside 5'-triphosphate = RNA(n+1) + diphosphate. Its function is as follows. DNA-dependent RNA polymerase catalyzes the transcription of DNA into RNA using the four ribonucleoside triphosphates as substrates. This chain is DNA-directed RNA polymerase subunit alpha, found in Burkholderia mallei (strain NCTC 10247).